Consider the following 378-residue polypeptide: MKFPEFKDYYQQLISTSSISSTDSSWDEGNAEVINKLAQWCEDLGCEVEIEEIEKGKLNLLAKLGSGEGGLLLAGHTDTVPYDEGRWNYEPHALTEANDRFYGLGTADMKGFFAFILEAIKNINWKDQSKPLYILATCDEETTMLGARHFASNTKIQPDYCIIGEPTSLKPIRGHKGHVANAIRVTGKSGHSSDPAHGVNALEIMNEIMFALMTLKNKLVKEYHNPGFSIPYPTLNLGHIHGGDSPNRICGCCELHYDVRPLPGISLDGLDNMLRDALKEVEAKWPGRIDITPLHEPIPGYECSADSPIVTSTADICGQDVETVNYCTEAPFLQDLCPTLVLGPGSIEQAHQPDEYLAFSFIDPTISVLSKLMYKHCF.

Residue His76 coordinates Zn(2+). The active site involves Asp78. Asp108 provides a ligand contact to Zn(2+). Glu140 is an active-site residue. Glu141, Glu165, and His351 together coordinate Zn(2+).

The protein belongs to the peptidase M20A family. ArgE subfamily. In terms of assembly, homodimer. Zn(2+) serves as cofactor. It depends on Co(2+) as a cofactor. Requires glutathione as cofactor.

It localises to the cytoplasm. It carries out the reaction N(2)-acetyl-L-ornithine + H2O = L-ornithine + acetate. It participates in amino-acid biosynthesis; L-arginine biosynthesis; L-ornithine from N(2)-acetyl-L-ornithine (linear): step 1/1. Functionally, catalyzes the hydrolysis of the amide bond of N(2)-acetylated L-amino acids. Cleaves the acetyl group from N-acetyl-L-ornithine to form L-ornithine, an intermediate in L-arginine biosynthesis pathway, and a branchpoint in the synthesis of polyamines. The polypeptide is Acetylornithine deacetylase (Aliivibrio fischeri (strain MJ11) (Vibrio fischeri)).